We begin with the raw amino-acid sequence, 627 residues long: Altered inheritance of mitochondria protein 9, mitochondrial (627 aa).

A mitochondrion-targeting transit peptide spans 1–43 (MIRYTVAGHSRRCVVGASKRVGAIKCITVAATKRFISNKPNEV).

It belongs to the AIM9 family.

It is found in the mitochondrion. The polypeptide is Altered inheritance of mitochondria protein 9, mitochondrial (AIM9) (Saccharomyces cerevisiae (strain ATCC 204508 / S288c) (Baker's yeast)).